Here is a 108-residue protein sequence, read N- to C-terminus: Nucleoid-associated protein CHAB381_0200 (108 aa).

It belongs to the YbaB/EbfC family. In terms of assembly, homodimer.

The protein resides in the cytoplasm. The protein localises to the nucleoid. Functionally, binds to DNA and alters its conformation. May be involved in regulation of gene expression, nucleoid organization and DNA protection. The sequence is that of Nucleoid-associated protein CHAB381_0200 from Campylobacter hominis (strain ATCC BAA-381 / DSM 21671 / CCUG 45161 / LMG 19568 / NCTC 13146 / CH001A).